Here is a 230-residue protein sequence, read N- to C-terminus: Probable C4-dicarboxylate response regulator DctR (230 aa).

The Response regulatory domain occupies 8-124 (RVLLIEDDPM…RLKAALTQYE (117 aa)). The residue at position 59 (Asp-59) is a 4-aspartylphosphate. The segment at residues 183–209 (EEIGRDVGLARVTVRRYLNYLESVGQV) is a DNA-binding region (H-T-H motif).

In terms of processing, phosphorylated by DctS.

Its subcellular location is the cytoplasm. Member of the two-component regulatory system DctS/DctR. Essential for expression of DctP. This chain is Probable C4-dicarboxylate response regulator DctR (dctR), found in Halalkalibacterium halodurans (strain ATCC BAA-125 / DSM 18197 / FERM 7344 / JCM 9153 / C-125) (Bacillus halodurans).